A 1114-amino-acid chain; its full sequence is Zinc finger E-box-binding homeobox 1 (1114 aa).

2 disordered regions span residues 1–105 (MADG…EVGC) and 142–163 (APEE…NGTP). Over residues 15–30 (PRRNNVTNYNNVIEAN) the composition is skewed to low complexity. Residues 149-160 (QGTPEASGQDEN) show a composition bias toward polar residues. C2H2-type zinc fingers lie at residues 170 to 193 (LTCP…KYRH), 200 to 222 (FSCS…MTSH), and 240 to 262 (FKCT…LRIH). The C2H2-type 4; atypical zinc finger occupies 268-292 (YECPNCKKRFSHSGSYSSHISSKKC). Disordered stretches follow at residues 304–326 (SGLK…PARP), 491–529 (NLKK…TNDS), 553–588 (KNPP…GQPP), and 636–716 (QISV…SRNS). The span at 309 to 326 (SQCSSPSLSASPGSPARP) shows a compositional bias: low complexity. The segment covering 504 to 523 (KNEKLPEDLTVKSEKDKNFE) has biased composition (basic and acidic residues). Composition is skewed to polar residues over residues 573–584 (APSETGENNLSP) and 636–681 (QISV…QNPA). The homeobox; atypical DNA-binding region spans 581 to 640 (NLSPGQPPLKNLLSLLKAYYALNAQPSAEELSKIADSVNLPLDVVKKWFEKMQAGQISVQ). Over residues 682–716 (NTSKSQTSSGGSTQNGSRSSTPSPSPLNLSSSRNS) the composition is skewed to low complexity. The short motif at 767 to 771 (PLNLT) is the CTBP-binding motif element. Polar residues-rich tracts occupy residues 852-866 (AVQE…ANGS) and 874-890 (SSEG…SDST). Residues 852-898 (AVQETPPKQTQANGSQDERQDTSSEGVSNVEDQNDSDSTPPKKKMRK) are disordered. C2H2-type zinc fingers lie at residues 904-926 (YACD…KYEH) and 932-954 (HECG…MRLH). The segment at 960 to 981 (YQCDKCGKRFSHSGSYSQHMNH) adopts a C2H2-type 7; atypical zinc-finger fold. The disordered stretch occupies residues 989 to 1114 (EAEERDSTEQ…QVSEEKTNKA (126 aa)). Over residues 1031–1047 (EEEEDSEKEEEEEEEKD) the composition is skewed to acidic residues. Residues 1048-1062 (VEGLQEEKECRKLQD) are compositionally biased toward basic and acidic residues. A compositionally biased stretch (acidic residues) spans 1063 to 1078 (VEEEEEVEEEEEEEEG). Residues 1079 to 1089 (KTEGNKNDDVV) show a composition bias toward basic and acidic residues.

Belongs to the delta-EF1/ZFH-1 C2H2-type zinc-finger family. In terms of tissue distribution, expression is developmentally regulated with high expression in mesoderm, nervous system and lens.

The protein localises to the nucleus. Acts as a transcriptional repressor. Positively regulates neuronal differentiation. Represses transcription by binding to the E box-containing promoter. Binds to delta 1-crystallin enhancer core and represses lens-specific transcription. It also binds many other non-lens specific DNA sequences. This is Zinc finger E-box-binding homeobox 1 (ZEB1) from Gallus gallus (Chicken).